The primary structure comprises 119 residues: Large ribosomal subunit protein uL18 (119 aa).

Belongs to the universal ribosomal protein uL18 family. Part of the 50S ribosomal subunit; part of the 5S rRNA/L5/L18/L25 subcomplex. Contacts the 5S and 23S rRNAs.

Functionally, this is one of the proteins that bind and probably mediate the attachment of the 5S RNA into the large ribosomal subunit, where it forms part of the central protuberance. The polypeptide is Large ribosomal subunit protein uL18 (Roseobacter denitrificans (strain ATCC 33942 / OCh 114) (Erythrobacter sp. (strain OCh 114))).